Consider the following 174-residue polypeptide: 2-C-methyl-D-erythritol 2,4-cyclodiphosphate synthase (174 aa).

A divalent metal cation-binding residues include Asp13, His15, and His61. Residue 13-15 (DAH) participates in 4-CDP-2-C-methyl-D-erythritol 2-phosphate binding. 4-CDP-2-C-methyl-D-erythritol 2-phosphate-binding positions include 75–77 (DIG), 149–152 (TTTD), Phe156, and Arg159.

The protein belongs to the IspF family. Homotrimer. A divalent metal cation is required as a cofactor.

It carries out the reaction 4-CDP-2-C-methyl-D-erythritol 2-phosphate = 2-C-methyl-D-erythritol 2,4-cyclic diphosphate + CMP. Its pathway is isoprenoid biosynthesis; isopentenyl diphosphate biosynthesis via DXP pathway; isopentenyl diphosphate from 1-deoxy-D-xylulose 5-phosphate: step 4/6. Functionally, involved in the biosynthesis of isopentenyl diphosphate (IPP) and dimethylallyl diphosphate (DMAPP), two major building blocks of isoprenoid compounds. Catalyzes the conversion of 4-diphosphocytidyl-2-C-methyl-D-erythritol 2-phosphate (CDP-ME2P) to 2-C-methyl-D-erythritol 2,4-cyclodiphosphate (ME-CPP) with a corresponding release of cytidine 5-monophosphate (CMP). The chain is 2-C-methyl-D-erythritol 2,4-cyclodiphosphate synthase from Bifidobacterium longum subsp. infantis (strain ATCC 15697 / DSM 20088 / JCM 1222 / NCTC 11817 / S12).